Reading from the N-terminus, the 458-residue chain is Chitin deacetylase 2 (458 aa).

Positions 1–51 (MIPSTAAAALLTLTAGVALAHPGCGGQEIGRRNVGGPMVYRRDVTDEASAA) are cleaved as a signal peptide. Residues Asn-87, Asn-99, and Asn-125 are each glycosylated (N-linked (GlcNAc...) asparagine). In terms of domain architecture, NodB homology spans 158–348 (MTWGLGFDDG…IKSAFSYIVP (191 aa)). Asp-165 acts as the Proton acceptor in catalysis. Asp-165 provides a ligand contact to acetate. A Co(2+)-binding site is contributed by Asp-166. A glycan (N-linked (GlcNAc...) asparagine) is linked at Asn-169. Co(2+) contacts are provided by His-215 and His-219. Acetate is bound at residue Tyr-256. N-linked (GlcNAc...) asparagine glycans are attached at residues Asn-271 and Asn-309. The active-site Proton donor is the His-322. 5 N-linked (GlcNAc...) asparagine glycosylation sites follow: Asn-326, Asn-354, Asn-363, Asn-378, and Asn-393. A disordered region spans residues 382-430 (STTQKDGSSSTNTSSSGSGSAAGSASATSSSDDSSSSGSASASSSSSNA). Ser-427 is lipidated: GPI-anchor amidated serine. A propeptide spans 428–458 (SNASSGALGMFDGLSGVGLVLSGVVAGVMLL) (removed in mature form). N-linked (GlcNAc...) asparagine glycosylation occurs at Asn-429.

This sequence belongs to the polysaccharide deacetylase family. Co(2+) serves as cofactor. Glycosylated.

It localises to the secreted. The protein localises to the cell wall. It is found in the cell membrane. It carries out the reaction [(1-&gt;4)-N-acetyl-beta-D-glucosaminyl](n) + n H2O = chitosan + n acetate. In terms of biological role, hydrolyzes the N-acetamido groups of N-acetyl-D-glucosamine residues in chitin to form chitosan and acetate. Chitosan is required to anchor melanin to the cell wall, for maintenance of cell wall integrity, and for cytokinesis. The polypeptide is Chitin deacetylase 2 (Cryptococcus neoformans var. neoformans serotype D (strain B-3501A) (Filobasidiella neoformans)).